Reading from the N-terminus, the 349-residue chain is Nicotinate-nucleotide--dimethylbenzimidazole phosphoribosyltransferase (349 aa).

Residues 1–20 are disordered; sequence MEFATVSPPDPGTAAAARAR. Catalysis depends on E313, which acts as the Proton acceptor.

The protein belongs to the CobT family.

It carries out the reaction 5,6-dimethylbenzimidazole + nicotinate beta-D-ribonucleotide = alpha-ribazole 5'-phosphate + nicotinate + H(+). The protein operates within nucleoside biosynthesis; alpha-ribazole biosynthesis; alpha-ribazole from 5,6-dimethylbenzimidazole: step 1/2. Its function is as follows. Catalyzes the synthesis of alpha-ribazole-5'-phosphate from nicotinate mononucleotide (NAMN) and 5,6-dimethylbenzimidazole (DMB). This chain is Nicotinate-nucleotide--dimethylbenzimidazole phosphoribosyltransferase, found in Mycolicibacterium paratuberculosis (strain ATCC BAA-968 / K-10) (Mycobacterium paratuberculosis).